We begin with the raw amino-acid sequence, 343 residues long: MGLLERLRKEWFIVGIILVIAAAKLEPTIGGKGGPLKPEITITYIAVSAIFFNSGLSLKTEELTNALMHVKLHLFVQLFTLVFFPTAIWVFLQVLSLTPINEWLLKGLQTVSCMPPPVSSAVILTKAVGGNEAAAIFNSAFGSFLGIVVTPLLLLLFLGSSSSVPFTSIFSQLFMTVVVPLIIGQIVRRYIKDWLERKKPPFGAISSCVLLMIIYTTFCDTFSNPNIDLDTFSLVIIVFIIFFIQLAFMLLTFLFSTSKNTGFTPADTVAIVFCSTHKSLTLGIPMLKIVFAGYEHLSLISVPLLIYHPAQILLGSVLVPTIKSWMLSRQKALKLTRQPKVPL.

The Cytoplasmic segment spans residues 1–10 (MGLLERLRKE). The chain crosses the membrane as a helical span at residues 11 to 31 (WFIVGIILVIAAAKLEPTIGG). Topologically, residues 32–37 (KGGPLK) are extracellular. Residues 38–58 (PEITITYIAVSAIFFNSGLSL) form a helical membrane-spanning segment. Residues 59 to 71 (KTEELTNALMHVK) are Cytoplasmic-facing. The helical transmembrane segment at 72 to 92 (LHLFVQLFTLVFFPTAIWVFL) threads the bilayer. Over 93-116 (QVLSLTPINEWLLKGLQTVSCMPP) the chain is Extracellular. A helical membrane pass occupies residues 117-137 (PVSSAVILTKAVGGNEAAAIF). Asn-138 is a topological domain (cytoplasmic). Residues 139–159 (SAFGSFLGIVVTPLLLLLFLG) form a helical membrane-spanning segment. Over 160–163 (SSSS) the chain is Extracellular. A helical transmembrane segment spans residues 164–184 (VPFTSIFSQLFMTVVVPLIIG). The Cytoplasmic segment spans residues 185–201 (QIVRRYIKDWLERKKPP). A helical transmembrane segment spans residues 202–222 (FGAISSCVLLMIIYTTFCDTF). Topologically, residues 223–234 (SNPNIDLDTFSL) are extracellular. A helical membrane pass occupies residues 235 to 255 (VIIVFIIFFIQLAFMLLTFLF). Over 256 to 270 (STSKNTGFTPADTVA) the chain is Cytoplasmic. The chain crosses the membrane as a helical span at residues 271-291 (IVFCSTHKSLTLGIPMLKIVF). Residues 292-298 (AGYEHLS) are Extracellular-facing. A helical transmembrane segment spans residues 299–319 (LISVPLLIYHPAQILLGSVLV). At 320-343 (PTIKSWMLSRQKALKLTRQPKVPL) the chain is on the cytoplasmic side.

Belongs to the bile acid:sodium symporter (BASS) (TC 2.A.28) family.

The protein localises to the cell membrane. The protein resides in the endoplasmic reticulum membrane. It is found in the golgi apparatus membrane. Its function is as follows. Involved in teeth and skeletal development. Has an essential role in the biosynthesis and trafficking of glycosaminoglycans and glycoproteins to produce a proper functioning extracellular matrix. Required for extracellular matrix mineralization. Also involved in the regulation of cellular calcium homeostasis. Does not show transport activity towards bile acids or steroid sulfates. This is Sodium/bile acid cotransporter 7 (slc10a7) from Xenopus tropicalis (Western clawed frog).